Here is a 375-residue protein sequence, read N- to C-terminus: Succinyl-diaminopimelate desuccinylase (375 aa).

His66 contacts Zn(2+). Asp68 is a catalytic residue. Asp99 is a binding site for Zn(2+). Catalysis depends on Glu133, which acts as the Proton acceptor. Zn(2+) is bound by residues Glu134, Glu162, and His348.

This sequence belongs to the peptidase M20A family. DapE subfamily. Homodimer. It depends on Zn(2+) as a cofactor. Co(2+) serves as cofactor.

The catalysed reaction is N-succinyl-(2S,6S)-2,6-diaminopimelate + H2O = (2S,6S)-2,6-diaminopimelate + succinate. It functions in the pathway amino-acid biosynthesis; L-lysine biosynthesis via DAP pathway; LL-2,6-diaminopimelate from (S)-tetrahydrodipicolinate (succinylase route): step 3/3. In terms of biological role, catalyzes the hydrolysis of N-succinyl-L,L-diaminopimelic acid (SDAP), forming succinate and LL-2,6-diaminopimelate (DAP), an intermediate involved in the bacterial biosynthesis of lysine and meso-diaminopimelic acid, an essential component of bacterial cell walls. This Salmonella dublin (strain CT_02021853) protein is Succinyl-diaminopimelate desuccinylase.